The primary structure comprises 373 residues: 3-dehydroquinate synthase (373 aa).

NAD(+) is bound by residues 107–111 (GVIGD), 131–132 (TS), Lys144, and Lys153. Residues Glu186, His249, and His267 each coordinate Zn(2+).

It belongs to the sugar phosphate cyclases superfamily. Dehydroquinate synthase family. Co(2+) is required as a cofactor. The cofactor is Zn(2+). It depends on NAD(+) as a cofactor.

The protein localises to the cytoplasm. The catalysed reaction is 7-phospho-2-dehydro-3-deoxy-D-arabino-heptonate = 3-dehydroquinate + phosphate. Its pathway is metabolic intermediate biosynthesis; chorismate biosynthesis; chorismate from D-erythrose 4-phosphate and phosphoenolpyruvate: step 2/7. In terms of biological role, catalyzes the conversion of 3-deoxy-D-arabino-heptulosonate 7-phosphate (DAHP) to dehydroquinate (DHQ). In Ruegeria sp. (strain TM1040) (Silicibacter sp.), this protein is 3-dehydroquinate synthase.